Consider the following 464-residue polypeptide: Arginine biosynthesis bifunctional protein ArgJ, chloroplastic (464 aa).

Positions 208, 234, 245, 332, 459, and 464 each coordinate substrate. The active-site Nucleophile is threonine 245.

The protein belongs to the ArgJ family. As to quaternary structure, heterodimer of an alpha and a beta chain.

The protein localises to the plastid. It is found in the chloroplast. It catalyses the reaction N(2)-acetyl-L-ornithine + L-glutamate = N-acetyl-L-glutamate + L-ornithine. It carries out the reaction L-glutamate + acetyl-CoA = N-acetyl-L-glutamate + CoA + H(+). Its pathway is amino-acid biosynthesis; L-arginine biosynthesis; L-ornithine and N-acetyl-L-glutamate from L-glutamate and N(2)-acetyl-L-ornithine (cyclic): step 1/1. It functions in the pathway amino-acid biosynthesis; L-arginine biosynthesis; N(2)-acetyl-L-ornithine from L-glutamate: step 1/4. In terms of biological role, catalyzes two activities which are involved in the cyclic version of arginine biosynthesis: the synthesis of acetylglutamate from glutamate and acetyl-CoA, and of ornithine by transacetylation between acetylornithine and glutamate. This Sorghum bicolor (Sorghum) protein is Arginine biosynthesis bifunctional protein ArgJ, chloroplastic.